A 232-amino-acid polypeptide reads, in one-letter code: Ion-translocating oxidoreductase complex subunit E (232 aa).

6 consecutive transmembrane segments (helical) span residues 12 to 31, 39 to 59, 69 to 89, 92 to 112, 125 to 145, and 182 to 202; these read LWRNNSSLVQLLGLCPLLAV, LGLGLATTLVLVCTNTAVSAL, IPIYVMIIASVVSAVQMLINA, FGLYQSLGIFIPLIVTNCIVI, ALAALDGLSIGLGSTCTLLLL, and PFLLAMLPPGAFIGLGFMLVG.

The protein belongs to the NqrDE/RnfAE family. The complex is composed of six subunits: RnfA, RnfB, RnfC, RnfD, RnfE and RnfG.

It localises to the cell inner membrane. In terms of biological role, part of a membrane-bound complex that couples electron transfer with translocation of ions across the membrane. The chain is Ion-translocating oxidoreductase complex subunit E from Sodalis glossinidius (strain morsitans).